Here is a 458-residue protein sequence, read N- to C-terminus: UDP-N-acetylmuramoylalanine--D-glutamate ligase (458 aa).

Residue 124 to 130 (GSDGKTT) coordinates ATP.

It belongs to the MurCDEF family.

It is found in the cytoplasm. The catalysed reaction is UDP-N-acetyl-alpha-D-muramoyl-L-alanine + D-glutamate + ATP = UDP-N-acetyl-alpha-D-muramoyl-L-alanyl-D-glutamate + ADP + phosphate + H(+). It participates in cell wall biogenesis; peptidoglycan biosynthesis. In terms of biological role, cell wall formation. Catalyzes the addition of glutamate to the nucleotide precursor UDP-N-acetylmuramoyl-L-alanine (UMA). The chain is UDP-N-acetylmuramoylalanine--D-glutamate ligase from Clostridium botulinum (strain Kyoto / Type A2).